The following is a 295-amino-acid chain: Phosphatidylserine decarboxylase proenzyme (295 aa).

Active-site charge relay system; for autoendoproteolytic cleavage activity residues include Asp113, His169, and Ser256. Ser256 (schiff-base intermediate with substrate; via pyruvic acid; for decarboxylase activity) is an active-site residue. Ser256 is modified (pyruvic acid (Ser); by autocatalysis).

It belongs to the phosphatidylserine decarboxylase family. PSD-B subfamily. Prokaryotic type II sub-subfamily. As to quaternary structure, heterodimer of a large membrane-associated beta subunit and a small pyruvoyl-containing alpha subunit. The cofactor is pyruvate. Is synthesized initially as an inactive proenzyme. Formation of the active enzyme involves a self-maturation process in which the active site pyruvoyl group is generated from an internal serine residue via an autocatalytic post-translational modification. Two non-identical subunits are generated from the proenzyme in this reaction, and the pyruvate is formed at the N-terminus of the alpha chain, which is derived from the carboxyl end of the proenzyme. The autoendoproteolytic cleavage occurs by a canonical serine protease mechanism, in which the side chain hydroxyl group of the serine supplies its oxygen atom to form the C-terminus of the beta chain, while the remainder of the serine residue undergoes an oxidative deamination to produce ammonia and the pyruvoyl prosthetic group on the alpha chain. During this reaction, the Ser that is part of the protease active site of the proenzyme becomes the pyruvoyl prosthetic group, which constitutes an essential element of the active site of the mature decarboxylase.

It is found in the cell membrane. The enzyme catalyses a 1,2-diacyl-sn-glycero-3-phospho-L-serine + H(+) = a 1,2-diacyl-sn-glycero-3-phosphoethanolamine + CO2. It functions in the pathway phospholipid metabolism; phosphatidylethanolamine biosynthesis; phosphatidylethanolamine from CDP-diacylglycerol: step 2/2. Functionally, catalyzes the formation of phosphatidylethanolamine (PtdEtn) from phosphatidylserine (PtdSer). The polypeptide is Phosphatidylserine decarboxylase proenzyme (Clostridium novyi (strain NT)).